The following is a 373-amino-acid chain: tRNA-specific 2-thiouridylase MnmA (373 aa).

ATP is bound by residues 12-19 and Met38; that span reads GMSGGVDS. Residues 98–100 are interaction with target base in tRNA; sequence NPD. The active-site Nucleophile is the Cys103. A disulfide bridge connects residues Cys103 and Cys200. Position 127 (Gly127) interacts with ATP. The segment at 150–152 is interaction with tRNA; it reads KDQ. The active-site Cysteine persulfide intermediate is the Cys200. The interaction with tRNA stretch occupies residues 312–313; the sequence is RY.

It belongs to the MnmA/TRMU family.

The protein localises to the cytoplasm. The enzyme catalyses S-sulfanyl-L-cysteinyl-[protein] + uridine(34) in tRNA + AH2 + ATP = 2-thiouridine(34) in tRNA + L-cysteinyl-[protein] + A + AMP + diphosphate + H(+). Functionally, catalyzes the 2-thiolation of uridine at the wobble position (U34) of tRNA, leading to the formation of s(2)U34. The chain is tRNA-specific 2-thiouridylase MnmA from Streptococcus pneumoniae (strain CGSP14).